Here is a 93-residue protein sequence, read N- to C-terminus: Putative pterin-4-alpha-carbinolamine dehydratase (93 aa).

The protein belongs to the pterin-4-alpha-carbinolamine dehydratase family.

The catalysed reaction is (4aS,6R)-4a-hydroxy-L-erythro-5,6,7,8-tetrahydrobiopterin = (6R)-L-erythro-6,7-dihydrobiopterin + H2O. The polypeptide is Putative pterin-4-alpha-carbinolamine dehydratase (Trichodesmium erythraeum (strain IMS101)).